The sequence spans 534 residues: Importin subunit alpha-1b (534 aa).

In terms of domain architecture, IBB spans 1-58; sequence MSLRPSERAEVRRSRYKVAVDADEGRRRREDNMVEIRKSRREESLLKKRRDGLPAAAA. ARM repeat units follow at residues 111–151, 154–193, 196–236, 238–277, 280–319, 322–362, 365–404, and 408–447; these read SPPI…NIAS, SDNT…NVAG, PKCR…NFCR, KPQP…YLSD, NDKI…NIVT, DMQT…NITA, REQI…NATS, and HDQI…NILK. Residues 505–534 form a disordered region; it reads DAMPSGDNAQNGFNFGNQQPNVPSGGFNFG. Residues 514 to 523 are compositionally biased toward low complexity; that stretch reads QNGFNFGNQQ.

Belongs to the importin alpha family. In terms of assembly, forms a complex with importin subunit beta-1. The whole complex, most stable and composed of importin alpha and importin beta, is referred to as PTAC or pore targeting complex. In terms of tissue distribution, highly expressed in root and weakly in callus, etiolated leaf and green leaf.

It is found in the cytoplasm. It localises to the perinuclear region. Functionally, functions in nuclear protein import. Binds specifically and directly to substrates containing either a simple or bipartite NLS motif. Promotes docking of import substrates to the nuclear envelope. In conjunction with importin beta-1, mediates the nuclear envelope docking, and the subsequent translocation into the nucleus of the constitutive morphogenetic 1 (COP1) protein containing bipartite NLS motif. The chain is Importin subunit alpha-1b from Oryza sativa subsp. japonica (Rice).